A 2370-amino-acid chain; its full sequence is Genome polyprotein (2370 aa).

A lipid anchor (N-myristoyl glycine; by host) is attached at Gly112. 2 disordered regions span residues Val140–Val173 and Gly704–Pro736. The span at Gly154–Asn171 shows a compositional bias: low complexity. The span at Ala713 to Thr725 shows a compositional bias: polar residues. An SF3 helicase domain is found at Tyr1358 to Lys1522. Gly1384–Ser1391 is a binding site for ATP. The N-myristoyl glycine; by host moiety is linked to residue Gly1597. A helical membrane pass occupies residues Ile1646–Leu1666. Positions Gly1674–Ser1696 are disordered. Tyr1676 is subject to O-(5'-phospho-RNA)-tyrosine. A Peptidase C3 domain is found at Gly1697–Val1886. Active-site for protease 3C activity residues include His1745, Glu1776, and Cys1849. The segment covering Ser2007 to Gly2016 has biased composition (polar residues). The disordered stretch occupies residues Ser2007–Asp2026. One can recognise a RdRp catalytic domain in the interval Ser2122–Glu2239. Active-site for RdRp activity residues include Asp2128 and Asp2225.

Interacts with capsid protein VP1. Interacts with capsid protein VP3. As to quaternary structure, interacts with capsid protein VP0. Interacts with capsid protein VP3. In terms of assembly, interacts with capsid protein VP0. Interacts with capsid protein VP1. Homodimer. Interacts with protein 2B. Interacts with protein 2C. As to quaternary structure, homodimer. Interacts with host ABCD3. Interacts with protein 2A. Interacts with host ACBD3. In terms of assembly, homodimer. Interacts with host ABCD3. Interacts with protein 2A. Interacts with protein 3A. Interacts with protein 3C. Interacts with host ACBD3. Homodimer. Interacts with host ABCD3 (via GOLD domain) and PI4KB; these interactions allow the formation of a viral protein/ACBD3/PI4KB complex in order to synthesize PI4P at the viral RNA replication sites. Interacts with protein 2C. Interacts with protein 3C. Protein 3C: Interacts with protein 2A. Protein 3C: Interacts with protein 2C. Specific enzymatic cleavages by the viral protease in vivo yield a variety of precursors and mature proteins. The leader protein-VP0 junction is cleaved by 3C proteinase. The VP1/2A junction is cleaved by the protein 3CD in association with protein 2A. Post-translationally, uridylylated by the polymerase and is covalently linked to the 5'-end of genomic RNA. This uridylylated form acts as a nucleotide-peptide primer for the polymerase.

The protein resides in the virion. It is found in the host cytoplasm. The protein localises to the host cytoplasmic vesicle membrane. It localises to the host Golgi apparatus membrane. The catalysed reaction is RNA(n) + a ribonucleoside 5'-triphosphate = RNA(n+1) + diphosphate. It carries out the reaction Selective cleavage of Gln-|-Gly bond in the poliovirus polyprotein. In other picornavirus reactions Glu may be substituted for Gln, and Ser or Thr for Gly.. The enzyme catalyses ATP + H2O = ADP + phosphate + H(+). Its function is as follows. Required for viral RNA replication and viral RNA encapsidation. Does not have any proteolytic activity. In terms of biological role, forms an icosahedral capsid of pseudo T=3 symmetry with capsid proteins VP0 and VP3. Together they form an icosahedral capsid composed of 60 copies of each VP0, VP1, and VP3. All the three latter proteins contain a beta-sheet structure called beta-barrel jelly roll. Forms an icosahedral capsid of pseudo T=3 symmetry with capsid proteins VP1 and VP3. Together they form an icosahedral capsid composed of 60 copies of each VP0, VP1, and VP3. All the three latter proteins contain a beta-sheet structure called beta-barrel jelly roll. Functionally, forms an icosahedral capsid of pseudo T=3 symmetry with capsid proteins VP0 and VP1. Together they form an icosahedral capsid composed of 60 copies of each VP0, VP1, and VP3. All the three latter proteins contain a beta-sheet structure called beta-barrel jelly roll. Its function is as follows. Required for viral RNA replication. Does not have any proteolytic activity. In terms of biological role, affects membrane integrity and causes an increase in membrane permeability. Induces and associates with structural rearrangements of intracellular membranes. Displays RNA-binding, nucleotide binding and NTPase activities. May play a role in virion morphogenesis and viral RNA encapsidation by interacting with the capsid protein VP3. Functionally, serves as membrane anchor via its hydrophobic domain. Plays an essential role in viral RNA replication by recruiting PI4KB at the viral replication sites, thereby allowing the formation of rearranged membranous structures where viral replication takes place. Its function is as follows. Forms a primer, VPg-pU, which is utilized by the polymerase for the initiation of RNA chains. In terms of biological role, cysteine protease that generates mature viral proteins from the precursor polyprotein. In addition to its proteolytic activity, it binds to viral RNA, and thus influences viral genome replication. RNA and substrate cooperatively bind to the protease. Replicates the genomic and antigenomic RNAs by recognizing replications specific signals. Performs VPg uridylylation. This chain is Genome polyprotein, found in Homo sapiens (Human).